A 535-amino-acid polypeptide reads, in one-letter code: Doublesex- and mab-3-related transcription factor A2 (535 aa).

Positions 69–116 (CARCRNHGVVSALKGHKRYCRWKDCLCAKCTLIAERQRVMAAQVALRR) form a DNA-binding region, DM. Residues 200-315 (LQAGRPGSPQ…GGPGPRQRTP (116 aa)) are disordered. The DMA domain maps to 313–348 (RTPLDILTRVFPGHRRGVLELVLQGCGGDVVQAIEQ).

Belongs to the DMRT family.

Its subcellular location is the nucleus. In terms of biological role, may be involved in sexual development. This Bos taurus (Bovine) protein is Doublesex- and mab-3-related transcription factor A2 (DMRTA2).